A 253-amino-acid chain; its full sequence is Ribosomal RNA small subunit methyltransferase J (253 aa).

Residues 101 to 102 (RD), 117 to 118 (ER), and Asp-169 contribute to the S-adenosyl-L-methionine site.

This sequence belongs to the methyltransferase superfamily. RsmJ family.

The protein localises to the cytoplasm. It carries out the reaction guanosine(1516) in 16S rRNA + S-adenosyl-L-methionine = N(2)-methylguanosine(1516) in 16S rRNA + S-adenosyl-L-homocysteine + H(+). Specifically methylates the guanosine in position 1516 of 16S rRNA. In Psychromonas ingrahamii (strain DSM 17664 / CCUG 51855 / 37), this protein is Ribosomal RNA small subunit methyltransferase J.